The following is a 141-amino-acid chain: HTH-type transcriptional regulator LrpA (141 aa).

The HTH asnC-type domain maps to 2–63; it reads VDERDKIILD…KINPKKLGYS (62 aa). Residues 21 to 40 constitute a DNA-binding region (H-T-H motif); the sequence is FTEIAKILGISETAVRKRVK.

In terms of assembly, homooctamer; tetramer of dimers.

Functionally, DNA-binding protein that negatively regulates its own transcription. Interferes with RNA polymerase (RNAP) recruitment by inhibiting the association of RNAP with the TBP-TFB promoter complex. In Pyrococcus abyssi (strain GE5 / Orsay), this protein is HTH-type transcriptional regulator LrpA (lrpA).